The sequence spans 142 residues: MNSKHSYVELKDKVIVPGWPTLMLEIDFVGGTSRNQFLNIPFLSVKEPLQLPREKKLTDYFTIDVEPAGHSLVNIYFQIDDFLLLTLNSLSVYKDPIRKYMFLRLNKEQSKHAINAAFNVFSYRLRNIGVGPLGPDIRSSGP.

Residues 64–66 and alanine 117 each bind GMP; that span reads DVE.

As to quaternary structure, homooligomer. Homotetramer. Interacts with phosphoprotein P. Binds to ssRNA. In terms of processing, not glycosylated.

Its subcellular location is the virion. It is found in the host cytoplasm. It localises to the host cell membrane. In terms of biological role, plays a crucial role in virion assembly and budding. In Bos taurus (Bovine), this protein is Matrix protein (M).